The following is a 1331-amino-acid chain: Receptor-type adenylate cyclase B (1331 aa).

At 1 to 33 (MYADATHPRRACWCGAGGVSGCVRQRHAYRCSR) the chain is on the cytoplasmic side. A helical transmembrane segment spans residues 34 to 54 (LLAGVLLIVGALTLTLAVSTV). Over 55–898 (PAAWAAGAVA…SHALTPAQRG (844 aa)) the chain is Extracellular. N-linked (GlcNAc...) asparagine glycosylation is found at N255, N429, N558, N574, and N657. Residues 899–919 (GAIAGIALLTVILLAVAGLAL) form a helical membrane-spanning segment. Over 920–1331 (YCCMDNRNND…PTVCNVRGAH (412 aa)) the chain is Cytoplasmic. The Guanylate cyclase domain maps to 940–1094 (TLLFTDIESS…DTSNMAARTE (155 aa)). D945 and D988 together coordinate Mg(2+).

Belongs to the adenylyl cyclase class-3 family. Mg(2+) is required as a cofactor.

The protein localises to the membrane. The catalysed reaction is ATP = 3',5'-cyclic AMP + diphosphate. Its function is as follows. Could act as a receptor for an unknown ligand. The chain is Receptor-type adenylate cyclase B (RAC-B) from Leishmania donovani.